We begin with the raw amino-acid sequence, 84 residues long: UPF0248 protein Pisl_1919 (84 aa).

It belongs to the UPF0248 family.

In Pyrobaculum islandicum (strain DSM 4184 / JCM 9189 / GEO3), this protein is UPF0248 protein Pisl_1919.